Here is a 935-residue protein sequence, read N- to C-terminus: Auxin response factor 6 (935 aa).

The TF-B3 DNA-binding region spans phenylalanine 129–asparagine 231. Disordered stretches follow at residues glutamine 536–threonine 624 and serine 645–aspartate 714. 2 stretches are compositionally biased toward low complexity: residues glutamine 546–glutamine 565 and serine 573–alanine 582. Polar residues-rich tracts occupy residues methionine 583 to threonine 624 and serine 661 to proline 689. Positions asparagine 796–glutamate 880 constitute a PB1 domain. Positions proline 896–asparagine 909 are enriched in polar residues. The segment at proline 896–serine 917 is disordered.

This sequence belongs to the ARF family. As to quaternary structure, homodimers and heterodimers. In terms of tissue distribution, expressed in the whole plant.

The protein localises to the nucleus. Auxin response factors (ARFs) are transcriptional factors that bind specifically to the DNA sequence 5'-TGTCTC-3' found in the auxin-responsive promoter elements (AuxREs). Seems to act as transcriptional activator. Formation of heterodimers with Aux/IAA proteins may alter their ability to modulate early auxin response genes expression. Regulates both stamen and gynoecium maturation. Promotes jasmonic acid production. Partially redundant with ARF8. This Arabidopsis thaliana (Mouse-ear cress) protein is Auxin response factor 6 (ARF6).